The primary structure comprises 180 residues: Ribulose bisphosphate carboxylase small subunit, chloroplastic 3 (180 aa).

The N-terminal 56 residues, Met-1–Lys-56, are a transit peptide targeting the chloroplast.

Belongs to the RuBisCO small chain family. As to quaternary structure, heterohexadecamer of 8 large and 8 small subunits.

Its subcellular location is the plastid. The protein resides in the chloroplast. RuBisCO catalyzes two reactions: the carboxylation of D-ribulose 1,5-bisphosphate, the primary event in carbon dioxide fixation, as well as the oxidative fragmentation of the pentose substrate. Both reactions occur simultaneously and in competition at the same active site. Although the small subunit is not catalytic it is essential for maximal activity. Binds to abscisic acid (ABA); only half of the possible binding sites are occupied in the crystal; and there are indications this is a low affinity site. The polypeptide is Ribulose bisphosphate carboxylase small subunit, chloroplastic 3 (RBCS.3A) (Pisum sativum (Garden pea)).